Here is a 328-residue protein sequence, read N- to C-terminus: Aspartate carbamoyltransferase catalytic subunit (328 aa).

Carbamoyl phosphate contacts are provided by Arg70 and Thr71. Residue Lys98 coordinates L-aspartate. Carbamoyl phosphate-binding residues include Arg120, His150, and Gln153. L-aspartate is bound by residues Arg183 and Arg238. Carbamoyl phosphate contacts are provided by Gly279 and Pro280.

It belongs to the aspartate/ornithine carbamoyltransferase superfamily. ATCase family. Heterododecamer (2C3:3R2) of six catalytic PyrB chains organized as two trimers (C3), and six regulatory PyrI chains organized as three dimers (R2).

The enzyme catalyses carbamoyl phosphate + L-aspartate = N-carbamoyl-L-aspartate + phosphate + H(+). The protein operates within pyrimidine metabolism; UMP biosynthesis via de novo pathway; (S)-dihydroorotate from bicarbonate: step 2/3. Functionally, catalyzes the condensation of carbamoyl phosphate and aspartate to form carbamoyl aspartate and inorganic phosphate, the committed step in the de novo pyrimidine nucleotide biosynthesis pathway. This chain is Aspartate carbamoyltransferase catalytic subunit, found in Methylococcus capsulatus (strain ATCC 33009 / NCIMB 11132 / Bath).